A 361-amino-acid polypeptide reads, in one-letter code: MAGNTLGQLFRVTTFGESHGLALGCIVDGVPPGIPLTEADLQHDLDRRRPGTSRYTTQRREPDQVKILSGVFEGVTTGTSIGLLIENTDQRSQDYSAIKDVFRPGHADYTYEQKYGLRDYRGGGRSSARETAMRVAAGAIAKKYLAEKHGIVIQGCLTQMGDIPLEIKDWQQVEQNPFFCPDPDKIDALDELMRALKKEGDSIGAKVTVVANGVPAGLGEPVFDRLDADIAHALMSINAVKGVEIGDGFDVVALRGSQNRDEITKEGFLSNHAGGILGGISSGQQIVAHMALKPTSSITVPGRTINRFGEEVEMITKGRHDPCVGIRAVPIAEAMLAIVLMDHLLRQRAQNADVKTDIPRW.

NADP(+)-binding residues include Arg48 and Arg54. FMN-binding positions include 125 to 127 (RSS), 238 to 239 (NA), Gly278, 293 to 297 (KPTSS), and Arg319.

This sequence belongs to the chorismate synthase family. As to quaternary structure, homotetramer. FMNH2 serves as cofactor.

The enzyme catalyses 5-O-(1-carboxyvinyl)-3-phosphoshikimate = chorismate + phosphate. The protein operates within metabolic intermediate biosynthesis; chorismate biosynthesis; chorismate from D-erythrose 4-phosphate and phosphoenolpyruvate: step 7/7. Catalyzes the anti-1,4-elimination of the C-3 phosphate and the C-6 proR hydrogen from 5-enolpyruvylshikimate-3-phosphate (EPSP) to yield chorismate, which is the branch point compound that serves as the starting substrate for the three terminal pathways of aromatic amino acid biosynthesis. This reaction introduces a second double bond into the aromatic ring system. This Citrobacter koseri (strain ATCC BAA-895 / CDC 4225-83 / SGSC4696) protein is Chorismate synthase.